Here is a 152-residue protein sequence, read N- to C-terminus: D-aminoacyl-tRNA deacylase (152 aa).

The short motif at 137-138 is the Gly-cisPro motif, important for rejection of L-amino acids element; that stretch reads GP.

This sequence belongs to the DTD family. In terms of assembly, homodimer.

The protein resides in the cytoplasm. The catalysed reaction is glycyl-tRNA(Ala) + H2O = tRNA(Ala) + glycine + H(+). The enzyme catalyses a D-aminoacyl-tRNA + H2O = a tRNA + a D-alpha-amino acid + H(+). Its function is as follows. An aminoacyl-tRNA editing enzyme that deacylates mischarged D-aminoacyl-tRNAs. Also deacylates mischarged glycyl-tRNA(Ala), protecting cells against glycine mischarging by AlaRS. Acts via tRNA-based rather than protein-based catalysis; rejects L-amino acids rather than detecting D-amino acids in the active site. By recycling D-aminoacyl-tRNA to D-amino acids and free tRNA molecules, this enzyme counteracts the toxicity associated with the formation of D-aminoacyl-tRNA entities in vivo and helps enforce protein L-homochirality. The chain is D-aminoacyl-tRNA deacylase from Aromatoleum aromaticum (strain DSM 19018 / LMG 30748 / EbN1) (Azoarcus sp. (strain EbN1)).